The sequence spans 429 residues: Serine carboxypeptidase-like (429 aa).

Intrachain disulfides connect Cys-58–Cys-298, Cys-226–Cys-241, and Cys-264–Cys-269. Asn-76 carries N-linked (GlcNAc...) asparagine glycosylation. Ser-148 is a catalytic residue. Asp-336 is a catalytic residue. Cys-339 contacts substrate. Residue His-393 is part of the active site. Residues Asn-414 and Asn-417 are each glycosylated (N-linked (GlcNAc...) asparagine).

This sequence belongs to the peptidase S10 family. As to expression, abundant in germinated embryos composed of leaf, root, and scutellum.

In Oryza sativa subsp. japonica (Rice), this protein is Serine carboxypeptidase-like (CBP31).